Reading from the N-terminus, the 146-residue chain is Leghemoglobin Lb120-1 (146 aa).

A Globin domain is found at 2-146; the sequence is GFTEKQEALV…LASAIKKAMN (145 aa). Residues Tyr24 and Tyr29 each carry the nitrated tyrosine modification. A heme b-binding site is contributed by Ser44. Position 44 is a phosphoserine (Ser44). His61 contacts O2. Heme b contacts are provided by Lys64, His93, and Lys96. Nitrated tyrosine is present on Tyr134.

Belongs to the plant globin family. In terms of assembly, monomer. Post-translationally, nitrated in effective nodules and particularly in hypoxic conditions; this mechanism may play a protective role in the symbiosis by buffering toxic peroxynitrite NO(2)(-). Nitration level decrease during nodule senescence. In terms of processing, phosphorylation at Ser-44 disrupts the molecular environment of its porphyrin ring oxygen binding pocket, thus leading to a reduced oxygen consumption and to the delivery of oxygen O(2) to symbiosomes. In terms of tissue distribution, root nodules.

The protein localises to the cytoplasm. The protein resides in the cytosol. It localises to the nucleus. Leghemoglobin that reversibly binds oxygen O(2) through a pentacoordinated heme iron. In root nodules, facilitates the diffusion of oxygen to the bacteroids while preventing the bacterial nitrogenase from being inactivated by buffering dioxygen, nitric oxide and carbon monoxide, and promoting the formation of reactive oxygen species (ROS, e.g. H(2)O(2)). This role is essential for symbiotic nitrogen fixation (SNF). The polypeptide is Leghemoglobin Lb120-1 (Pisum sativum (Garden pea)).